The chain runs to 629 residues: MNYHEHFDVIVIGGGHAGTEAAAAAARMGMNTLLLTHNIETLGQMSCNPAIGGIGKGHLVREIDALGGLMANAADKAGIQFRILNGSKGPAVRATRAQADRLLYKAAIREKLENQENLKIFQQEVEDLVVENDRVSGVVTKMGIKFSAKTVVLTVGTFLNGQIHVGLKNHSGGRAGDSASIGLAQRLRELPLRTGRLKTGTPARIDSRSIDFSALEVQHGDNPTPVFSFLGDRSEHPRQIPCYITHTNEKTHDIIRRNLDRSPMYSGVIEGVGPRYCPSIEDKVMRFADKNSHQIFVEPEGLTTNEIYPNGISTSLPFDVQIDFIRSMKGFENAFVTRPGYAIEYDYFDPRDLKSTLESKYIDGLFFAGQINGTTGYEEAAAQGLLAGMNAGLMVQDKEGWCPGRDQAYAGVLVDDLSTLGTKEPYRMFTSRAEYRLLLREDNADTRLTEKGRELGLVDDIRWKAFSMKQESVETEIQRLKNQWIHPKSENASQINALLKTPMQRESTLEGMIRRPEVNYQSLISIEGLGPVLENVQAAEQVEIIIKYQGYVDRQREEIEKLKRNEDTLLPIHLDYSDIKGLSNEVTAKLNDTKPENIGQASRISGITPAAISILLIYIKKNALRRKVL.

Residues 13 to 18, Val-125, and Ser-180 contribute to the FAD site; that span reads GGGHAG. Residue 273–287 coordinates NAD(+); that stretch reads GPRYCPSIEDKVMRF. Gln-370 is an FAD binding site.

The protein belongs to the MnmG family. Homodimer. Heterotetramer of two MnmE and two MnmG subunits. The cofactor is FAD.

Its subcellular location is the cytoplasm. Its function is as follows. NAD-binding protein involved in the addition of a carboxymethylaminomethyl (cmnm) group at the wobble position (U34) of certain tRNAs, forming tRNA-cmnm(5)s(2)U34. In Psychromonas ingrahamii (strain DSM 17664 / CCUG 51855 / 37), this protein is tRNA uridine 5-carboxymethylaminomethyl modification enzyme MnmG.